The primary structure comprises 317 residues: Protoheme IX farnesyltransferase (317 aa).

Helical transmembrane passes span 28–48 (IIPL…HGHI), 53–73 (LLIT…LNCI), 101–121 (LIFA…FVNL), 122–142 (LSAC…THWL), 150–170 (IVIG…AVTG), 178–198 (ILFA…ALMI), 223–243 (IWIY…PFQA), 246–266 (LFYA…AWEL), and 282–302 (YSIL…LPAV).

It belongs to the UbiA prenyltransferase family. Protoheme IX farnesyltransferase subfamily.

The protein localises to the cell inner membrane. It carries out the reaction heme b + (2E,6E)-farnesyl diphosphate + H2O = Fe(II)-heme o + diphosphate. It functions in the pathway porphyrin-containing compound metabolism; heme O biosynthesis; heme O from protoheme: step 1/1. Functionally, converts heme B (protoheme IX) to heme O by substitution of the vinyl group on carbon 2 of heme B porphyrin ring with a hydroxyethyl farnesyl side group. In Picosynechococcus sp. (strain ATCC 27264 / PCC 7002 / PR-6) (Agmenellum quadruplicatum), this protein is Protoheme IX farnesyltransferase.